A 274-amino-acid chain; its full sequence is MTLACCKLDPHPQSPARQHTGPWLVWLHGLLGSGQDWLPVAELCGDYPSLLIDLPGHGNSVALTTTGFEDISRQISETLQANGIREYWLAGYSLGGRIAMYHACYGHKVGLQGLLVEGGNLGLESDELRKARFEQDCQWAQRFRHEPLPQVLADWYQQDVFADLDSQQREQLVAVRANNHGPAVADMLEATSLGHQPWLLPALQCLSVPYTYLCGERDHKFQQVAHQYKLPLRTLARAGHNAHRANPGAFAALVLSFLSQSSFLPLSSFLPPSR.

This sequence belongs to the AB hydrolase superfamily. MenH family. Monomer.

The enzyme catalyses 5-enolpyruvoyl-6-hydroxy-2-succinyl-cyclohex-3-ene-1-carboxylate = (1R,6R)-6-hydroxy-2-succinyl-cyclohexa-2,4-diene-1-carboxylate + pyruvate. It functions in the pathway quinol/quinone metabolism; 1,4-dihydroxy-2-naphthoate biosynthesis; 1,4-dihydroxy-2-naphthoate from chorismate: step 3/7. Its pathway is quinol/quinone metabolism; menaquinone biosynthesis. Catalyzes a proton abstraction reaction that results in 2,5-elimination of pyruvate from 2-succinyl-5-enolpyruvyl-6-hydroxy-3-cyclohexene-1-carboxylate (SEPHCHC) and the formation of 2-succinyl-6-hydroxy-2,4-cyclohexadiene-1-carboxylate (SHCHC). The polypeptide is 2-succinyl-6-hydroxy-2,4-cyclohexadiene-1-carboxylate synthase (Yersinia enterocolitica serotype O:8 / biotype 1B (strain NCTC 13174 / 8081)).